Consider the following 355-residue polypeptide: Histidinol-phosphate aminotransferase (355 aa).

Residue K214 is modified to N6-(pyridoxal phosphate)lysine.

This sequence belongs to the class-II pyridoxal-phosphate-dependent aminotransferase family. Histidinol-phosphate aminotransferase subfamily. As to quaternary structure, homodimer. Pyridoxal 5'-phosphate serves as cofactor.

The catalysed reaction is L-histidinol phosphate + 2-oxoglutarate = 3-(imidazol-4-yl)-2-oxopropyl phosphate + L-glutamate. Its pathway is amino-acid biosynthesis; L-histidine biosynthesis; L-histidine from 5-phospho-alpha-D-ribose 1-diphosphate: step 7/9. The chain is Histidinol-phosphate aminotransferase (hisC) from Buchnera aphidicola subsp. Schizaphis graminum (strain Sg).